We begin with the raw amino-acid sequence, 337 residues long: BRI1 kinase inhibitor 1 (337 aa).

Residues 1 to 25 (METNLQQVKNSSQTFSEKQNPKQEA) are compositionally biased toward polar residues. Disordered regions lie at residues 1-38 (METN…SSPS) and 51-72 (SSSS…SSYQ). Positions 26 to 38 (SPSPISSTCSSPS) are enriched in low complexity. Tyr211 bears the Phosphotyrosine mark. Residues 270–310 (SAPASMRTSPTNSGHLRVSTAGLSSSSGSTSSSSSDSTMEE) form a disordered region. Positions 288-310 (STAGLSSSSGSTSSSSSDSTMEE) are enriched in low complexity.

In terms of assembly, interacts (via C-terminus) with BRI1 (via kinase domain). Phosphorylated on Tyr-211 in response to brassinosteroid perception, leading to its inactivation: once phosphorylated, displaced into the cytosol where it is inactive. In terms of tissue distribution, expressed in leaves, petioles, shoot apices, hypocotyls, roots and flowers.

Its subcellular location is the cell membrane. The protein resides in the cytoplasm. In terms of biological role, negative regulator of brassinosteroid signaling. When associated to the membrane, limits the interaction of BRI1 with BAK1 by binding to the kinase-inactive form of BRI1. The protein is BRI1 kinase inhibitor 1 (BKI1) of Arabidopsis thaliana (Mouse-ear cress).